The following is an 809-amino-acid chain: AP-3 complex subunit beta (809 aa).

5 HEAT repeats span residues 37–76, 112–151, 153–186, 187–224, and 524–561; these read YYSQNINPQQLVTLLNSRNSREVRDAMKRIISIMASDDDS, DPNLTLLSINSLQKSLSDSNSELRCFALSALSDMKMSSLA, IILHTVKKLVTDPSAMVRGEVALAIIKLYRAGKN, DYHEELLDILKELMADTDPKVISCAVLAYKECYADHLE, and KICPDVLRRLIQNFSNEGPETRCQILVLSAKLLSYDID. Residues Ser693, Ser698, Ser724, and Ser726 each carry the phosphoserine modification. 2 disordered regions span residues 708–739 and 763–809; these read FTSSSNAKLTGINDGDSNSISGKGNVNTFTSQ and PRKI…HLEL. Polar residues predominate over residues 722 to 739; that stretch reads GDSNSISGKGNVNTFTSQ. Over residues 772-791 the composition is skewed to acidic residues; that stretch reads ESSDEDEDESEESSDDDEYS. Positions 792–809 are enriched in low complexity; the sequence is DSSLGTSSSGTSSSHLEL.

The protein belongs to the adaptor complexes large subunit family. Adaptor protein complex 3 (AP-3) is a heterotetramer composed of 2 large adaptins (APL5 and APL6), a medium adaptin (APM3) and a small adaptin (APS3). Post-translationally, pyrophosphorylated by 5-diphosphoinositol pentakisphosphate (5-IP7). Serine pyrophosphorylation is achieved by Mg(2+)-dependent, but enzyme independent transfer of a beta-phosphate from a inositol pyrophosphate to a pre-phosphorylated serine residue.

It is found in the golgi apparatus. The protein resides in the cytoplasmic vesicle. The protein localises to the clathrin-coated vesicle membrane. Its function is as follows. Part of the AP-3 complex, an adaptor-related complex which is not clathrin-associated. The complex is associated with the Golgi region as well as more peripheral structures. It facilitates the budding of vesicles from the Golgi membrane and may be directly involved in trafficking to the vacuole. Required for the transport via the ALP pathway, which directs the transport of the cargo proteins PHO8 and VAM3 to the vacuole. The polypeptide is AP-3 complex subunit beta (APL6) (Saccharomyces cerevisiae (strain ATCC 204508 / S288c) (Baker's yeast)).